We begin with the raw amino-acid sequence, 436 residues long: NADH-quinone oxidoreductase subunit D 1 (436 aa).

The protein belongs to the complex I 49 kDa subunit family. In terms of assembly, NDH-1 is composed of 14 different subunits. Subunits NuoB, C, D, E, F, and G constitute the peripheral sector of the complex.

It localises to the cell inner membrane. The enzyme catalyses a quinone + NADH + 5 H(+)(in) = a quinol + NAD(+) + 4 H(+)(out). Functionally, NDH-1 shuttles electrons from NADH, via FMN and iron-sulfur (Fe-S) centers, to quinones in the respiratory chain. The immediate electron acceptor for the enzyme in this species is believed to be ubiquinone. Couples the redox reaction to proton translocation (for every two electrons transferred, four hydrogen ions are translocated across the cytoplasmic membrane), and thus conserves the redox energy in a proton gradient. The polypeptide is NADH-quinone oxidoreductase subunit D 1 (Stenotrophomonas maltophilia (strain R551-3)).